We begin with the raw amino-acid sequence, 884 residues long: Translation initiation factor IF-2 (884 aa).

Residues 93-288 are disordered; that stretch reads VNTPEAEQAK…KGKRKPSTLQ (196 aa). Residues 99-209 are compositionally biased toward basic and acidic residues; the sequence is EQAKAEEQAQ…KMAAENEGKW (111 aa). Residues 216-229 are compositionally biased toward polar residues; that stretch reads QTESADYHVTTSQH. Residues 231–246 show a composition bias toward basic and acidic residues; the sequence is RAAEDENDAKVEGDRR. Positions 247 to 261 are enriched in basic residues; that stretch reads SRTRGGKATKQKKGN. Positions 262 to 275 are enriched in basic and acidic residues; that stretch reads KLSESKADREEARA. The tr-type G domain maps to 383–552; sequence HRAPVVTIMG…LLQAEVLELK (170 aa). A G1 region spans residues 392–399; it reads GHVDHGKT. Position 392–399 (392–399) interacts with GTP; sequence GHVDHGKT. Positions 417–421 are G2; it reads GITQH. The G3 stretch occupies residues 438–441; that stretch reads DTPG. Residues 438-442 and 492-495 each bind GTP; these read DTPGH and NKID. Residues 492–495 form a G4 region; that stretch reads NKID. The G5 stretch occupies residues 528 to 530; sequence SAK.

The protein belongs to the TRAFAC class translation factor GTPase superfamily. Classic translation factor GTPase family. IF-2 subfamily.

Its subcellular location is the cytoplasm. Its function is as follows. One of the essential components for the initiation of protein synthesis. Protects formylmethionyl-tRNA from spontaneous hydrolysis and promotes its binding to the 30S ribosomal subunits. Also involved in the hydrolysis of GTP during the formation of the 70S ribosomal complex. This Yersinia pestis bv. Antiqua (strain Angola) protein is Translation initiation factor IF-2.